Consider the following 652-residue polypeptide: Serine/threonine-protein kinase ssp1 (652 aa).

The residue at position 58 (Tyr-58) is a Phosphotyrosine. Phosphoserine is present on Ser-59. Position 63 is a phosphotyrosine (Tyr-63). A Protein kinase domain is found at 135-409 (YEIIKELGRG…LVEVKLHPWT (275 aa)). ATP-binding positions include 141–149 (LGRGMHGKV) and Lys-164. Asp-267 (proton acceptor) is an active-site residue. Disordered stretches follow at residues 467–491 (DSSS…SIGL) and 506–529 (NESQ…SSEK). Residues 508–518 (SQKDRERKQVH) show a composition bias toward basic and acidic residues.

It belongs to the protein kinase superfamily. Ser/Thr protein kinase family.

The protein resides in the cytoplasm. It carries out the reaction L-seryl-[protein] + ATP = O-phospho-L-seryl-[protein] + ADP + H(+). The catalysed reaction is L-threonyl-[protein] + ATP = O-phospho-L-threonyl-[protein] + ADP + H(+). Functionally, involved in actin localization and thus in polarized cell growth. The protein is Serine/threonine-protein kinase ssp1 (ssp1) of Schizosaccharomyces pombe (strain 972 / ATCC 24843) (Fission yeast).